The sequence spans 361 residues: S-adenosylmethionine:tRNA ribosyltransferase-isomerase (361 aa).

This sequence belongs to the QueA family. As to quaternary structure, monomer.

The protein resides in the cytoplasm. It carries out the reaction 7-aminomethyl-7-carbaguanosine(34) in tRNA + S-adenosyl-L-methionine = epoxyqueuosine(34) in tRNA + adenine + L-methionine + 2 H(+). The protein operates within tRNA modification; tRNA-queuosine biosynthesis. Transfers and isomerizes the ribose moiety from AdoMet to the 7-aminomethyl group of 7-deazaguanine (preQ1-tRNA) to give epoxyqueuosine (oQ-tRNA). The sequence is that of S-adenosylmethionine:tRNA ribosyltransferase-isomerase from Actinobacillus pleuropneumoniae serotype 3 (strain JL03).